Here is a 218-residue protein sequence, read N- to C-terminus: Peptide methionine sulfoxide reductase MsrA (218 aa).

The active site involves Cys57.

This sequence belongs to the MsrA Met sulfoxide reductase family.

It catalyses the reaction L-methionyl-[protein] + [thioredoxin]-disulfide + H2O = L-methionyl-(S)-S-oxide-[protein] + [thioredoxin]-dithiol. The catalysed reaction is [thioredoxin]-disulfide + L-methionine + H2O = L-methionine (S)-S-oxide + [thioredoxin]-dithiol. In terms of biological role, has an important function as a repair enzyme for proteins that have been inactivated by oxidation. Catalyzes the reversible oxidation-reduction of methionine sulfoxide in proteins to methionine. The sequence is that of Peptide methionine sulfoxide reductase MsrA from Brucella abortus (strain S19).